A 431-amino-acid polypeptide reads, in one-letter code: Adenylosuccinate synthetase (431 aa).

GTP is bound by residues 13–19 and 41–43; these read GDEGKGK and GHT. The active-site Proton acceptor is D14. 2 residues coordinate Mg(2+): D14 and G41. IMP contacts are provided by residues 14–17, 39–42, T130, R144, Q225, T240, and R304; these read DEGK and NAGH. H42 functions as the Proton donor in the catalytic mechanism. 300-306 lines the substrate pocket; the sequence is ATTGRKR. GTP-binding positions include R306, 332–334, and 415–417; these read KLD and STG.

The protein belongs to the adenylosuccinate synthetase family. In terms of assembly, homodimer. Requires Mg(2+) as cofactor.

The protein localises to the cytoplasm. It carries out the reaction IMP + L-aspartate + GTP = N(6)-(1,2-dicarboxyethyl)-AMP + GDP + phosphate + 2 H(+). The protein operates within purine metabolism; AMP biosynthesis via de novo pathway; AMP from IMP: step 1/2. Its function is as follows. Plays an important role in the de novo pathway of purine nucleotide biosynthesis. Catalyzes the first committed step in the biosynthesis of AMP from IMP. This chain is Adenylosuccinate synthetase, found in Shewanella woodyi (strain ATCC 51908 / MS32).